Here is a 181-residue protein sequence, read N- to C-terminus: Transmembrane protein 154 (181 aa).

An N-terminal signal peptide occupies residues 1–22; the sequence is MTVPCAALVLALGLAFGQSSQG. The tract at residues 19–47 is disordered; sequence SSQGNDEESEYSGQSITEEENSEDETTRS. Over 23–74 the chain is Extracellular; the sequence is NDEESEYSGQSITEEENSEDETTRSALATVTTEALAENVNSTHTNDTSNQVE. A helical membrane pass occupies residues 75 to 95; sequence FILMVAIPLAALLILLFMVLI. At 96-181 the chain is on the cytoplasmic side; sequence ATYFKSKRPK…PNPSPSDNES (86 aa). The interval 103–122 is disordered; it reads RPKQEPSSQGSQSALQTHEL. The segment covering 107–118 has biased composition (polar residues); that stretch reads EPSSQGSQSALQ. A Phosphotyrosine modification is found at Tyr160. The interval 161–181 is disordered; it reads ECLPTLKEEKEPNPSPSDNES. Residue Ser177 is modified to Phosphoserine.

It localises to the membrane. The polypeptide is Transmembrane protein 154 (Tmem154) (Mus musculus (Mouse)).